The sequence spans 157 residues: Phosphopantetheine adenylyltransferase (157 aa).

Substrate is bound at residue Thr10. Residues 10 to 11 (TF) and His18 each bind ATP. Substrate is bound by residues Lys42, Leu74, and Arg88. Residues 89–91 (GLR), Glu99, and 124–130 (NAFISSS) each bind ATP.

Belongs to the bacterial CoaD family. In terms of assembly, homohexamer. Requires Mg(2+) as cofactor.

The protein resides in the cytoplasm. It carries out the reaction (R)-4'-phosphopantetheine + ATP + H(+) = 3'-dephospho-CoA + diphosphate. Its pathway is cofactor biosynthesis; coenzyme A biosynthesis; CoA from (R)-pantothenate: step 4/5. Functionally, reversibly transfers an adenylyl group from ATP to 4'-phosphopantetheine, yielding dephospho-CoA (dPCoA) and pyrophosphate. This chain is Phosphopantetheine adenylyltransferase, found in Helicobacter pylori (strain P12).